The following is a 343-amino-acid chain: Protein-glutamate methylesterase/protein-glutamine glutaminase 2 (343 aa).

A Response regulatory domain is found at 5-122 (KVLVVDDSAI…SVGDMSGQLV (118 aa)). Position 56 is a 4-aspartylphosphate (Asp56). Residues 154–343 (AETSNKVIAI…SIADEIVRMV (190 aa)) form the CheB-type methylesterase domain. Catalysis depends on residues Ser166, His192, and Asp288.

This sequence belongs to the CheB family. In terms of processing, phosphorylated by CheA. Phosphorylation of the N-terminal regulatory domain activates the methylesterase activity.

It localises to the cytoplasm. The enzyme catalyses [protein]-L-glutamate 5-O-methyl ester + H2O = L-glutamyl-[protein] + methanol + H(+). It catalyses the reaction L-glutaminyl-[protein] + H2O = L-glutamyl-[protein] + NH4(+). In terms of biological role, involved in chemotaxis. Part of a chemotaxis signal transduction system that modulates chemotaxis in response to various stimuli. Catalyzes the demethylation of specific methylglutamate residues introduced into the chemoreceptors (methyl-accepting chemotaxis proteins or MCP) by CheR. Also mediates the irreversible deamidation of specific glutamine residues to glutamic acid. The chain is Protein-glutamate methylesterase/protein-glutamine glutaminase 2 from Syntrophus aciditrophicus (strain SB).